Here is a 451-residue protein sequence, read N- to C-terminus: Histidinol dehydrogenase (451 aa).

The segment at M1–A20 is disordered. Residues L7–R19 show a composition bias toward basic and acidic residues. The NAD(+) site is built by Y129, Q193, and N218. 3 residues coordinate substrate: T241, Q263, and H266. Zn(2+) contacts are provided by Q263 and H266. Residues E332 and H333 each act as proton acceptor in the active site. 4 residues coordinate substrate: H333, D366, E420, and H425. Position 366 (D366) interacts with Zn(2+). H425 provides a ligand contact to Zn(2+).

Belongs to the histidinol dehydrogenase family. The cofactor is Zn(2+).

The catalysed reaction is L-histidinol + 2 NAD(+) + H2O = L-histidine + 2 NADH + 3 H(+). The protein operates within amino-acid biosynthesis; L-histidine biosynthesis; L-histidine from 5-phospho-alpha-D-ribose 1-diphosphate: step 9/9. In terms of biological role, catalyzes the sequential NAD-dependent oxidations of L-histidinol to L-histidinaldehyde and then to L-histidine. The polypeptide is Histidinol dehydrogenase (Corynebacterium efficiens (strain DSM 44549 / YS-314 / AJ 12310 / JCM 11189 / NBRC 100395)).